The primary structure comprises 434 residues: MAAPLALVLVVAVTVRAALFRSSLAEFISERVEVVSPLSSWKRVVEGLALLDLGVSPYSGAVFHETPLIIYLFHFLIDYAELVFMITDALTAIALYFAIQDFNKVVFKKQKLLLELDQYAPDVAELIRTPMEMRYIPLKVALYLLNPYTILSCVAKSTCAINNTLIAFFILTTIKGSVFLSAVFLALATYQSLYPVTLFAPGLLYLLQRQYIPVKVKSKAFWIFSWEYAMMYTGSLVVIVCLSFFLLSSWDFIPAVYGFILSVPDLTPNIGLFWYFFAEMFEHFSLFFVCVFQINVFFYTVPLAIKLKEHPIFFMFIQIAIISIFKSYPTVGDVALYMAFFPVWNHLYRFLRNIFVLTCIIIVCSLLFPVLWHLWIYAGSANSNFFYAITLTFNVGQILLISDYFYAFLRREYYLTHGLYLTAKDGTEAMLVLK.

Residues 1–3 (MAA) lie on the Cytoplasmic side of the membrane. A helical membrane pass occupies residues 4–22 (PLALVLVVAVTVRAALFRS). Topologically, residues 23–78 (SLAEFISERVEVVSPLSSWKRVVEGLALLDLGVSPYSGAVFHETPLIIYLFHFLID) are lumenal. Residues 79–99 (YAELVFMITDALTAIALYFAI) form a helical membrane-spanning segment. The Cytoplasmic segment spans residues 100-136 (QDFNKVVFKKQKLLLELDQYAPDVAELIRTPMEMRYI). The next 4 helical transmembrane spans lie at 137 to 157 (PLKV…VAKS), 158 to 177 (TCAI…IKGS), 178 to 193 (VFLS…YQSL), and 194 to 204 (YPVTLFAPGLL). Residues 205–221 (YLLQRQYIPVKVKSKAF) lie on the Cytoplasmic side of the membrane. Lys-215 contacts a cardiolipin. The chain crosses the membrane as a helical span at residues 222 to 243 (WIFSWEYAMMYTGSLVVIVCLS). The Lumenal segment spans residues 244-285 (FFLLSSWDFIPAVYGFILSVPDLTPNIGLFWYFFAEMFEHFS). A helical transmembrane segment spans residues 286 to 305 (LFFVCVFQINVFFYTVPLAI). At 306–310 (KLKEH) the chain is on the cytoplasmic side. Lys-308 is an a cardiolipin binding site. The next 2 helical transmembrane spans lie at 311–330 (PIFF…SYPT) and 331–344 (VGDV…FPVW). Residues 345–353 (NHLYRFLRN) are Cytoplasmic-facing. The helical transmembrane segment at 354-371 (IFVLTCIIIVCSLLFPVL) threads the bilayer. Residues 372–383 (WHLWIYAGSANS) lie on the Lumenal side of the membrane. A 2-acyl-6-[6-phosphoethanolamine-alpha-D-mannosyl-(1-&gt;2)-6-phosphoethanolamine-alpha-D-mannosyl-(1-&gt;6)-2-phosphoethanolamine-alpha-D-mannosyl-(1-&gt;4)-alpha-D-glucosaminyl]-1-(1-radyl,2-acyl-sn-glycero-3-phospho)-1D-myo-inositol-binding residues include Asn-382 and Asn-384. A helical membrane pass occupies residues 384–405 (NFFYAITLTFNVGQILLISDYF). Residues 406-434 (YAFLRREYYLTHGLYLTAKDGTEAMLVLK) are Cytoplasmic-facing.

This sequence belongs to the PIGU family. In terms of assembly, heteropentamer. Part of the GPI-anchor transamidase complex, consisting of PIGK, PIGT, PIGS, PIGU and GAA1.

The protein localises to the endoplasmic reticulum membrane. Its pathway is glycolipid biosynthesis; glycosylphosphatidylinositol-anchor biosynthesis. Its function is as follows. Component of the glycosylphosphatidylinositol-anchor (GPI-anchor) transamidase (GPI-T) complex that catalyzes the formation of the linkage between a proprotein and a GPI-anchor and participates in GPI anchored protein biosynthesis. Binds the lipid portion of GPI-anchor. May act as an organizer in the transmembrane layer to recruit other subunits, and thus is essential for assembly of the complex. This Mus musculus (Mouse) protein is GPI-anchor transamidase component PIGU.